The chain runs to 591 residues: Monoterpene synthase 8, chloroplastic (591 aa).

Residues 1–46 constitute a chloroplast transit peptide; the sequence is MSLLLAPPSYFPFRGLRRSTAAKQPPCLRLVKCTADRQSPEAARRS. D346, D350, and E497 together coordinate Mg(2+). The short motif at 346 to 350 is the DDXXD motif element; that stretch reads DDVYD.

This sequence belongs to the terpene synthase family. Tpsa subfamily. Mg(2+) is required as a cofactor. It depends on Mn(2+) as a cofactor. As to expression, highly expressed in flowers, petals and sepals, but almost undetectable in vegetative organs.

It localises to the plastid. It is found in the chloroplast. It carries out the reaction (2E)-geranyl diphosphate + H2O = (R)-linalool + diphosphate. It catalyses the reaction (2E)-geranyl diphosphate + H2O = (S)-linalool + diphosphate. The catalysed reaction is (2E,6E)-farnesyl diphosphate = (S)-beta-bisabolene + diphosphate. The enzyme catalyses (2E,6E)-farnesyl diphosphate = (E,R)-alpha-bisabolene + diphosphate. It carries out the reaction (2E,6E)-farnesyl diphosphate = (E)-beta-farnesene + diphosphate. It catalyses the reaction (2E,6E)-farnesyl diphosphate = beta-sesquiphellandrene + diphosphate. The catalysed reaction is (2E,6E)-farnesyl diphosphate = (1S,5S,6R)-alpha-bergamotene + diphosphate. It functions in the pathway secondary metabolite biosynthesis; terpenoid biosynthesis. Functionally, sesquiterpene and monoterpene synthase involved in the biosynthesis of volatile compounds present in floral scent. Mediates the conversion of (2E)-geranyl diphosphate (GPP) into linalool, with trace levels of myrcene, limonene and (Z)-beta-ocimene. Also acts as a sesquiterpene synthase by catalyzing the conversion of farnesyl diphosphate (FPP) to alpha-bergamotene and beta-bisabolene and to minor products including alpha-curcumene, cis-alpha-bisabolene, beta-farnesene and beta-sesquiphellandrene, as well as seven other unidentified sesquiterpenes. The sequence is that of Monoterpene synthase 8, chloroplastic from Hedychium coronarium (White butterfly ginger-lily).